The chain runs to 945 residues: Leucine--tRNA ligase 1 (945 aa).

The short motif at 42-52 (PYTNSPLHIGH) is the 'HIGH' region element. The 'KMSKS' region motif lies at 625–629 (KMSKS). Lys-628 is an ATP binding site.

The protein belongs to the class-I aminoacyl-tRNA synthetase family.

Its subcellular location is the cytoplasm. It catalyses the reaction tRNA(Leu) + L-leucine + ATP = L-leucyl-tRNA(Leu) + AMP + diphosphate. This chain is Leucine--tRNA ligase 1, found in Sulfurisphaera tokodaii (strain DSM 16993 / JCM 10545 / NBRC 100140 / 7) (Sulfolobus tokodaii).